The sequence spans 500 residues: Probable cytosol aminopeptidase (500 aa).

Mn(2+) is bound by residues lysine 264 and aspartate 269. The active site involves lysine 276. 3 residues coordinate Mn(2+): aspartate 287, aspartate 346, and glutamate 348. Arginine 350 is an active-site residue.

It belongs to the peptidase M17 family. It depends on Mn(2+) as a cofactor.

It localises to the cytoplasm. It catalyses the reaction Release of an N-terminal amino acid, Xaa-|-Yaa-, in which Xaa is preferably Leu, but may be other amino acids including Pro although not Arg or Lys, and Yaa may be Pro. Amino acid amides and methyl esters are also readily hydrolyzed, but rates on arylamides are exceedingly low.. It carries out the reaction Release of an N-terminal amino acid, preferentially leucine, but not glutamic or aspartic acids.. In terms of biological role, presumably involved in the processing and regular turnover of intracellular proteins. Catalyzes the removal of unsubstituted N-terminal amino acids from various peptides. This Rhodopseudomonas palustris (strain ATCC BAA-98 / CGA009) protein is Probable cytosol aminopeptidase.